We begin with the raw amino-acid sequence, 185 residues long: Ribosome-recycling factor (185 aa).

This sequence belongs to the RRF family.

The protein localises to the cytoplasm. Responsible for the release of ribosomes from messenger RNA at the termination of protein biosynthesis. May increase the efficiency of translation by recycling ribosomes from one round of translation to another. The polypeptide is Ribosome-recycling factor (Lacticaseibacillus casei (strain BL23) (Lactobacillus casei)).